Here is a 211-residue protein sequence, read N- to C-terminus: ATP-dependent Clp protease proteolytic subunit (211 aa).

Catalysis depends on Ser106, which acts as the Nucleophile. His131 is an active-site residue.

Belongs to the peptidase S14 family. Fourteen ClpP subunits assemble into 2 heptameric rings which stack back to back to give a disk-like structure with a central cavity, resembling the structure of eukaryotic proteasomes.

It is found in the cytoplasm. The enzyme catalyses Hydrolysis of proteins to small peptides in the presence of ATP and magnesium. alpha-casein is the usual test substrate. In the absence of ATP, only oligopeptides shorter than five residues are hydrolyzed (such as succinyl-Leu-Tyr-|-NHMec, and Leu-Tyr-Leu-|-Tyr-Trp, in which cleavage of the -Tyr-|-Leu- and -Tyr-|-Trp bonds also occurs).. Functionally, cleaves peptides in various proteins in a process that requires ATP hydrolysis. Has a chymotrypsin-like activity. Plays a major role in the degradation of misfolded proteins. This Maricaulis maris (strain MCS10) (Caulobacter maris) protein is ATP-dependent Clp protease proteolytic subunit.